Here is a 359-residue protein sequence, read N- to C-terminus: N-acetylneuraminate-9-phosphate synthase (359 aa).

N6-acetyllysine is present on residues K61, K74, and K79. At S275 the chain carries Phosphoserine. An N6-acetyllysine modification is found at K290. One can recognise an AFP-like domain in the interval 294–353 (SVVAKVKIPAGTTLTLDMLTVKVGEPKGYPPEDIFNLAGKKVLVTIEEDDTVMEESVESH).

In terms of tissue distribution, ubiquitous.

The protein localises to the cytoplasm. It carries out the reaction aldehydo-N-acetyl-D-mannosamine 6-phosphate + phosphoenolpyruvate + H2O = N-acetylneuraminate 9-phosphate + phosphate. Catalyzes condensation of phosphoenolpyruvate (PEP) and N-acetylmannosamine 6-phosphate (ManNAc-6-P) to synthesize N-acetylneuraminate-9-phosphate (Neu5Ac-9-P). Neu5Ac-9-P is the phosphorylated forms of sialic acid N-acetylneuraminic acid (Neu5Ac). In contrast with human ortholog, has no detectable activity towards D-mannose 6-phosphate. In Mus musculus (Mouse), this protein is N-acetylneuraminate-9-phosphate synthase.